The sequence spans 507 residues: ATP synthase subunit alpha, chloroplastic (507 aa).

170–177 (GDRQTGKT) contributes to the ATP binding site. Position 383 is a phosphoserine (Ser383).

The protein belongs to the ATPase alpha/beta chains family. F-type ATPases have 2 components, CF(1) - the catalytic core - and CF(0) - the membrane proton channel. CF(1) has five subunits: alpha(3), beta(3), gamma(1), delta(1), epsilon(1). CF(0) has four main subunits: a, b, b' and c. Only phosphorylated in mesophyll cells, and only when cells are grown under high rather than low light regimes (70 vs 900 umol photons/m-2/s).

It is found in the plastid. Its subcellular location is the chloroplast thylakoid membrane. It carries out the reaction ATP + H2O + 4 H(+)(in) = ADP + phosphate + 5 H(+)(out). In terms of biological role, produces ATP from ADP in the presence of a proton gradient across the membrane. The alpha chain is a regulatory subunit. The chain is ATP synthase subunit alpha, chloroplastic from Zea mays (Maize).